The primary structure comprises 86 residues: Large ribosomal subunit protein bL31B (86 aa).

It belongs to the bacterial ribosomal protein bL31 family. Type B subfamily. Part of the 50S ribosomal subunit.

The chain is Large ribosomal subunit protein bL31B from Salmonella agona (strain SL483).